A 362-amino-acid polypeptide reads, in one-letter code: Uracil-DNA glycosylase (362 aa).

The disordered stretch occupies residues 28-97; it reads ASVAPNDPTE…AGPTEDPNFA (70 aa). D205 acts as the Proton acceptor in catalysis.

This sequence belongs to the uracil-DNA glycosylase (UDG) superfamily. UNG family.

The protein resides in the host nucleus. It catalyses the reaction Hydrolyzes single-stranded DNA or mismatched double-stranded DNA and polynucleotides, releasing free uracil.. Its function is as follows. Excises uracil residues from the DNA which can arise as a result of misincorporation of dUMP residues by DNA polymerase or deamination of cytosines. Therefore may reduce deleterious uracil incorporation into the viral genome, particularly in terminally differentiated cells which lack DNA repair enzymes. The protein is Uracil-DNA glycosylase (UL2) of Psittacid herpesvirus 1 (isolate Amazon parrot/-/97-0001/1997) (PsHV-1).